A 236-amino-acid chain; its full sequence is Giant extracellular hemoglobin linker 2 chain (236 aa).

The 43-residue stretch at 66–108 folds into the LDL-receptor class A domain; sequence NGCEPRHFQCGGSAMECISDLLTCDGSPDCANGADEDSDVCHI. Cystine bridges form between C68-C82, C75-C95, and C89-C106.

In terms of assembly, disulfide-linked dimer of identical chains. A model is proposed for the subunit structure of the Tylorrhynchus hemoglobin, consisting of 216 polypeptides chains, 192 heme-containing chains, and 24 linker chains.

Acts as a linker for the assembly of heme-containing chains in the construction of giant hemoglobin. In Tylorrhynchus heterochetus (Japanese palolo worm), this protein is Giant extracellular hemoglobin linker 2 chain.